Consider the following 734-residue polypeptide: Mechanosensitive ion channel protein 10 (734 aa).

Disordered stretches follow at residues 1–75 (MAEQ…LTQR) and 115–136 (SFSR…APVT). A compositionally biased stretch (basic and acidic residues) spans 24-39 (EASRRSKEMASPESEK). S34 bears the Phosphoserine mark. Composition is skewed to polar residues over residues 65 to 75 (PNQNNVGLTQR) and 117 to 129 (SRAS…NRSV). Phosphoserine occurs at positions 128 and 131. Helical transmembrane passes span 164-184 (ISTL…ALVA), 196-216 (FWGL…SGML), 249-269 (SVQV…LFNH), 288-308 (LISI…LKIL), 516-536 (LVTA…LEVA), and 551-571 (LAFI…FVFV).

This sequence belongs to the MscS (TC 1.A.23) family. As to expression, detected in the root tip and throughout the vasculature of the root and leaf.

The protein localises to the cell membrane. In terms of biological role, mechanosensitive channel that opens in response to stretch forces in the membrane lipid bilayer. This chain is Mechanosensitive ion channel protein 10 (MSL10), found in Arabidopsis thaliana (Mouse-ear cress).